The chain runs to 101 residues: YcgL domain-containing protein ABBFA_001807 (101 aa).

In terms of domain architecture, YcgL spans 1-92; that stretch reads MHCDIYRSSK…PPEGLINPNA (92 aa).

This chain is YcgL domain-containing protein ABBFA_001807, found in Acinetobacter baumannii (strain AB307-0294).